Reading from the N-terminus, the 187-residue chain is Adenine phosphoribosyltransferase (187 aa).

It belongs to the purine/pyrimidine phosphoribosyltransferase family. In terms of assembly, homodimer.

The protein resides in the cytoplasm. It carries out the reaction AMP + diphosphate = 5-phospho-alpha-D-ribose 1-diphosphate + adenine. It functions in the pathway purine metabolism; AMP biosynthesis via salvage pathway; AMP from adenine: step 1/1. Functionally, catalyzes a salvage reaction resulting in the formation of AMP, that is energically less costly than de novo synthesis. This chain is Adenine phosphoribosyltransferase, found in Yersinia pestis (strain Pestoides F).